The chain runs to 186 residues: Elongation factor P (186 aa).

Belongs to the elongation factor P family.

The protein resides in the cytoplasm. Its pathway is protein biosynthesis; polypeptide chain elongation. In terms of biological role, involved in peptide bond synthesis. Stimulates efficient translation and peptide-bond synthesis on native or reconstituted 70S ribosomes in vitro. Probably functions indirectly by altering the affinity of the ribosome for aminoacyl-tRNA, thus increasing their reactivity as acceptors for peptidyl transferase. This Streptococcus sanguinis (strain SK36) protein is Elongation factor P.